The following is a 279-amino-acid chain: Large ribosomal subunit protein uL2 (279 aa).

Disordered regions lie at residues 33–58 and 223–279; these read LLAPLPKKGGRNAHGRITTRHQGGGH and GVAM…RKRG. Composition is skewed to basic residues over residues 40 to 58 and 269 to 279; these read KGGRNAHGRITTRHQGGGH and VRRRYATRKRG.

Belongs to the universal ribosomal protein uL2 family. Part of the 50S ribosomal subunit. Forms a bridge to the 30S subunit in the 70S ribosome.

One of the primary rRNA binding proteins. Required for association of the 30S and 50S subunits to form the 70S ribosome, for tRNA binding and peptide bond formation. It has been suggested to have peptidyltransferase activity; this is somewhat controversial. Makes several contacts with the 16S rRNA in the 70S ribosome. The polypeptide is Large ribosomal subunit protein uL2 (Salinispora arenicola (strain CNS-205)).